Here is a 352-residue protein sequence, read N- to C-terminus: Protein NDRG4 (352 aa).

Residues Ser298, Ser317, and Ser323 each carry the phosphoserine modification. A compositionally biased stretch (low complexity) spans 314-323; sequence RTASLTSASS. The segment at 314–352 is disordered; sequence RTASLTSASSVDGSRPQACTHSESSEGLGQVNHTMEVSC. Polar residues predominate over residues 330 to 352; it reads QACTHSESSEGLGQVNHTMEVSC.

It belongs to the NDRG family. Post-translationally, phosphorylated in an aortic smooth muscle cell line, following PDGF treatment. Expressed predominantly in brain and heart (at protein level). In the brain, detected in astrocytes. Isoform 1 and isoform 2 are only expressed in brain. Isoform 3 is expressed in both heart and brain. Up-regulated in glioblastoma multiforme cells.

It localises to the cytoplasm. The protein localises to the cytosol. In terms of biological role, contributes to the maintenance of intracerebral BDNF levels within the normal range, which is necessary for the preservation of spatial learning and the resistance to neuronal cell death caused by ischemic stress. May enhance growth factor-induced ERK1 and ERK2 phosphorylation, including that induced by PDGF and FGF. May attenuate NGF-promoted ELK1 phosphorylation in a microtubule-dependent manner. The chain is Protein NDRG4 (NDRG4) from Homo sapiens (Human).